Here is a 217-residue protein sequence, read N- to C-terminus: tRNA (guanine-N(7)-)-methyltransferase (217 aa).

Residues Glu-44, Glu-69, Asp-96, and Asp-118 each contribute to the S-adenosyl-L-methionine site. Residue Asp-118 is part of the active site. Substrate contacts are provided by residues Lys-122, Asp-154, and Thr-191–Glu-194.

It belongs to the class I-like SAM-binding methyltransferase superfamily. TrmB family.

The catalysed reaction is guanosine(46) in tRNA + S-adenosyl-L-methionine = N(7)-methylguanosine(46) in tRNA + S-adenosyl-L-homocysteine. Its pathway is tRNA modification; N(7)-methylguanine-tRNA biosynthesis. Catalyzes the formation of N(7)-methylguanine at position 46 (m7G46) in tRNA. This chain is tRNA (guanine-N(7)-)-methyltransferase, found in Bacillus cereus (strain G9842).